The following is a 196-amino-acid chain: Dual-action ribosomal maturation protein DarP (196 aa).

This sequence belongs to the DarP family.

It localises to the cytoplasm. In terms of biological role, member of a network of 50S ribosomal subunit biogenesis factors which assembles along the 30S-50S interface, preventing incorrect 23S rRNA structures from forming. Promotes peptidyl transferase center (PTC) maturation. In Stenotrophomonas maltophilia (strain R551-3), this protein is Dual-action ribosomal maturation protein DarP.